Here is a 320-residue protein sequence, read N- to C-terminus: Foldase protein PrsA (320 aa).

An N-terminal signal peptide occupies residues 1-20; it reads MKMINKLIVPVTASALLLGA. The N-palmitoyl cysteine moiety is linked to residue cysteine 21. Cysteine 21 carries the S-diacylglycerol cysteine lipid modification. The region spanning 139 to 245 is the PpiC domain; sequence EDSKKASHIL…FGYHIIKADK (107 aa). The segment at 159–198 is disordered; sequence EGLDDKEAKQKAEEIQKEVSKDPSKFGEIAKKESMDTGSA.

It belongs to the PrsA family.

The protein resides in the cell membrane. The enzyme catalyses [protein]-peptidylproline (omega=180) = [protein]-peptidylproline (omega=0). Its function is as follows. Plays a major role in protein secretion by helping the post-translocational extracellular folding of several secreted proteins. The chain is Foldase protein PrsA from Staphylococcus aureus (strain Mu3 / ATCC 700698).